The chain runs to 529 residues: Variant surface glycoprotein MITAT 1.6 (529 aa).

The first 24 residues, Met-1 to Ala-24, serve as a signal peptide directing secretion. 2 disulfides stabilise this stretch: Cys-39–Cys-170 and Cys-147–Cys-214. N-linked (GlcNAc...) (high mannose) asparagine glycosylation occurs at Asn-456. Asp-506 is lipidated: GPI-anchor amidated aspartate. A propeptide spans Ser-507–Phe-529 (removed in mature form).

N-glycosylated; glycan is composed of 6 to 9 mannose residues.

The protein resides in the cell membrane. VSG forms a coat on the surface of the parasite. The trypanosome evades the immune response of the host by expressing a series of antigenically distinct VSGs from an estimated 1000 VSG genes. In Trypanosoma brucei brucei, this protein is Variant surface glycoprotein MITAT 1.6.